We begin with the raw amino-acid sequence, 1093 residues long: MPGVIMDNATTGRPGHAPDTQTPSNGDNLRNGSFHINGAAKGDKDHDPDKESYAGKPRIDGHRALPEIPHITQGFFPFSTLVNRSVQQCWNELSDLITELAAIHVSPHSSVPLLPVNGKSPGNQSPENVQKKLRILDFAHAKRAEFIKLLVLSQWSRRARDVSKLIDLQNFIRARHQAFVDALQRVGEMKRDLVQAQVANPDLQTALEILSKGRLESLADLGYKSSKLLTARGALRRLHKINRIISARLALHDLIPHPFRTYRVHDGRVTFVVRGEFELDLSIGAESELSQFFFVDIRFLYSPSSNIPKGRMSNEIDAKINEKLRDSGLTGCFNFLHGLVLTNKIHILFKQAIELAKGLWSETLRVELLHRTLVIQYWTLKPGPKSWIEIGVKSGNGDADSQGLGVPCLGLRWMRDGQEVNSRDIEFDPEDLSMECLLRSVIALHISYLLSSAYGILSEYSLFSSGTLSSHAILNVTEPGECQLSVQLTGSRHLRVSIEPMSGAVILSATPGLLERFESDASLDRSTIDDLVARVSRLRCIAAIEELESNVRILGFETVSPKGLRNDIRKVFPANVLRFSLFWHPLWERNWVVAATSSITSDNWWVVRLRRSSEVATDFSVSDTSVPLCSGHSMSDTFLATSHQTRSSSFPDLGYCLSGMVAIYANVSYLSDLHSVEFHPPLCALKVESDLQIPDIFIRYQVSNLPRALQLVLPAGLKRKNLLKDTVRLAFHGIDRHKNSAIFVAYGNLVGPWTDLCTLISKSDSSLVFKQGGSGFALRLLAPAGRPVIVQLFKSLQTLECTLSILDFLRQRRLTPQSLSLTHIAFAYGPGRDLSATIEMGLSEVPSSAELDPVRVLARTDPLLCLTLGIRFKHPNPHRRVQGSLAAILNHASNEAGLDFVTEVLSFTLPLMRALEQITSNASRQEPFRLQVIVRNAYTFLLHYTYQGFRFQLTTRQHSGQLTWVLRELSSPEAGPGHDQFKARLRGTLYHSKGNGWKGLGNGVVADAEGVSNVIRALDGCFTGAQHNTWLPRETKSEQDYSTQPAPENQSQTGAPSQAGMANDTKMTANFVNDKSLQRNPVVSNAADVITID.

Disordered stretches follow at residues 1 to 62 (MPGV…IDGH) and 1034 to 1065 (ETKSEQDYSTQPAPENQSQTGAPSQAGMANDT). Over residues 19 to 31 (DTQTPSNGDNLRN) the composition is skewed to polar residues. Positions 41-62 (KGDKDHDPDKESYAGKPRIDGH) are enriched in basic and acidic residues. The span at 1040–1056 (DYSTQPAPENQSQTGAP) shows a compositional bias: polar residues.

It belongs to the Mediator complex subunit 14 family. Component of the Mediator complex.

It is found in the nucleus. Functionally, component of the Mediator complex, a coactivator involved in the regulated transcription of nearly all RNA polymerase II-dependent genes. Mediator functions as a bridge to convey information from gene-specific regulatory proteins to the basal RNA polymerase II transcription machinery. Mediator is recruited to promoters by direct interactions with regulatory proteins and serves as a scaffold for the assembly of a functional preinitiation complex with RNA polymerase II and the general transcription factors. The chain is Mediator of RNA polymerase II transcription subunit 14 (rgr1) from Aspergillus fumigatus (strain ATCC MYA-4609 / CBS 101355 / FGSC A1100 / Af293) (Neosartorya fumigata).